Reading from the N-terminus, the 92-residue chain is Phospholemman (92 aa).

The signal sequence occupies residues 1-20; sequence MASPGHILIVCVCLLSMASA. Residues 21–35 lie on the Extracellular side of the membrane; it reads EAPQEPDPFTYDYHT. Residues 36 to 56 form a helical membrane-spanning segment; that stretch reads LRIGGLTIAGILFILGILIIL. At 57-92 the chain is on the cytoplasmic side; that stretch reads SKRCRCKFNQQQRTGEPDEEEGTFRSSIRRLSTRRR. Cys60 carries the S-palmitoyl cysteine lipid modification. At Cys62 the chain carries S-glutathionyl cysteine; alternate. The S-palmitoyl cysteine; alternate moiety is linked to residue Cys62. The interval 66-92 is disordered; it reads QQQRTGEPDEEEGTFRSSIRRLSTRRR. Thr79 is modified (phosphothreonine). Position 82 is a phosphoserine (Ser82). Ser83 carries the post-translational modification Phosphoserine; by PKA and PKC. Residues 83 to 92 are compositionally biased toward basic residues; it reads SIRRLSTRRR. The residue at position 88 (Ser88) is a Phosphoserine; by PKA. Thr89 is subject to Phosphothreonine; by PKC.

It belongs to the FXYD family. As to quaternary structure, homotetramer. Monomer. Regulatory subunit of the sodium/potassium-transporting ATPase (NKA) which is composed of a catalytic alpha subunit, a non-catalytic beta subunit and an additional regulatory subunit. The monomeric form associates with NKA while the oligomeric form does not. Interacts with the catalytic alpha-1 subunit ATP1A1. Also interacts with the catalytic alpha-2 and alpha-3 subunits ATP1A2 and ATP1A3. Very little interaction with ATP1A1, ATP1A2 or ATP1A3 when phosphorylated at Ser-83. Interacts with the non-catalytic beta-1 subunit ATP1B1. Oxidative stress decreases interaction with ATP1A1 but increases interaction with ATP1B1. Post-translationally, major plasma membrane substrate for cAMP-dependent protein kinase (PKA) and protein kinase C (PKC) in several different tissues. Phosphorylated in response to insulin and adrenergic stimulation. Phosphorylation at Ser-88 stimulates sodium/potassium-transporting ATPase activity while the unphosphorylated form inhibits sodium/potassium-transporting ATPase activity. Phosphorylation increases tetramerization, decreases binding to ATP1A1 and reduces inhibition of ATP1A1 activity. Phosphorylation at Ser-83 leads to greatly reduced interaction with ATP1A1, ATP1A2 and ATP1A3. May be phosphorylated by DMPK. Palmitoylation increases half-life and stability and is enhanced upon phosphorylation at Ser-88 by PKA. As to expression, in adult brain, highest levels are found in the cerebellum and in the lateral, third and fourth ventricles of the choroid plexus (at protein level). Also detected in cells of a portion of the ependymal lining of the lateral ventricle on its rostral surface posterior to the caudate putamen (at protein level). Expressed in a subset of neurons which secrete gonadotropin-releasing hormone.

The protein resides in the cell membrane. Its subcellular location is the sarcolemma. The protein localises to the apical cell membrane. It localises to the membrane. It is found in the caveola. The protein resides in the T-tubule. Functionally, associates with and regulates the activity of the sodium/potassium-transporting ATPase (NKA) which transports Na(+) out of the cell and K(+) into the cell. Inhibits NKA activity in its unphosphorylated state and stimulates activity when phosphorylated. Reduces glutathionylation of the NKA beta-1 subunit ATP1B1, thus reversing glutathionylation-mediated inhibition of ATP1B1. Contributes to female sexual development by maintaining the excitability of neurons which secrete gonadotropin-releasing hormone. In Rattus norvegicus (Rat), this protein is Phospholemman.